The primary structure comprises 349 residues: Protein RecA (349 aa).

An ATP-binding site is contributed by 65–72 (GPESSGKT).

This sequence belongs to the RecA family.

The protein localises to the cytoplasm. Its function is as follows. Can catalyze the hydrolysis of ATP in the presence of single-stranded DNA, the ATP-dependent uptake of single-stranded DNA by duplex DNA, and the ATP-dependent hybridization of homologous single-stranded DNAs. It interacts with LexA causing its activation and leading to its autocatalytic cleavage. The protein is Protein RecA of Aliarcobacter butzleri (strain RM4018) (Arcobacter butzleri).